Here is a 545-residue protein sequence, read N- to C-terminus: Chaperonin GroEL (545 aa).

Residues 30–33 (TLGP), lysine 51, 87–91 (DGTTT), glycine 415, and aspartate 495 each bind ATP.

It belongs to the chaperonin (HSP60) family. In terms of assembly, forms a cylinder of 14 subunits composed of two heptameric rings stacked back-to-back. Interacts with the co-chaperonin GroES.

The protein localises to the cytoplasm. It carries out the reaction ATP + H2O + a folded polypeptide = ADP + phosphate + an unfolded polypeptide.. Functionally, together with its co-chaperonin GroES, plays an essential role in assisting protein folding. The GroEL-GroES system forms a nano-cage that allows encapsulation of the non-native substrate proteins and provides a physical environment optimized to promote and accelerate protein folding. This Shewanella baltica (strain OS185) protein is Chaperonin GroEL.